Reading from the N-terminus, the 432-residue chain is Bifunctional protein GlmU (432 aa).

Residues 1–224 (MSEISVIILA…EENFMGINDK (224 aa)) are pyrophosphorylase. UDP-N-acetyl-alpha-D-glucosamine-binding positions include 9 to 12 (LAAG), K23, and 82 to 83 (GT). A Mg(2+)-binding site is contributed by D103. Residues G136, E150, N165, and N222 each contribute to the UDP-N-acetyl-alpha-D-glucosamine site. Residue N222 coordinates Mg(2+). The segment at 225–245 (FALSKAETIIQNEIKENLMKN) is linker. The segment at 246–432 (GVLMRLPESI…FFAKFFKEIK (187 aa)) is N-acetyltransferase. UDP-N-acetyl-alpha-D-glucosamine contacts are provided by R309 and K326. Catalysis depends on H337, which acts as the Proton acceptor. Residues Y340 and N351 each contribute to the UDP-N-acetyl-alpha-D-glucosamine site. Acetyl-CoA contacts are provided by residues 360–361 (NY), S379, A397, and R414.

In the N-terminal section; belongs to the N-acetylglucosamine-1-phosphate uridyltransferase family. The protein in the C-terminal section; belongs to the transferase hexapeptide repeat family. Homotrimer. Mg(2+) serves as cofactor.

It is found in the cytoplasm. The catalysed reaction is alpha-D-glucosamine 1-phosphate + acetyl-CoA = N-acetyl-alpha-D-glucosamine 1-phosphate + CoA + H(+). It carries out the reaction N-acetyl-alpha-D-glucosamine 1-phosphate + UTP + H(+) = UDP-N-acetyl-alpha-D-glucosamine + diphosphate. It functions in the pathway nucleotide-sugar biosynthesis; UDP-N-acetyl-alpha-D-glucosamine biosynthesis; N-acetyl-alpha-D-glucosamine 1-phosphate from alpha-D-glucosamine 6-phosphate (route II): step 2/2. The protein operates within nucleotide-sugar biosynthesis; UDP-N-acetyl-alpha-D-glucosamine biosynthesis; UDP-N-acetyl-alpha-D-glucosamine from N-acetyl-alpha-D-glucosamine 1-phosphate: step 1/1. Its pathway is bacterial outer membrane biogenesis; LPS lipid A biosynthesis. Catalyzes the last two sequential reactions in the de novo biosynthetic pathway for UDP-N-acetylglucosamine (UDP-GlcNAc). The C-terminal domain catalyzes the transfer of acetyl group from acetyl coenzyme A to glucosamine-1-phosphate (GlcN-1-P) to produce N-acetylglucosamine-1-phosphate (GlcNAc-1-P), which is converted into UDP-GlcNAc by the transfer of uridine 5-monophosphate (from uridine 5-triphosphate), a reaction catalyzed by the N-terminal domain. This Campylobacter hominis (strain ATCC BAA-381 / DSM 21671 / CCUG 45161 / LMG 19568 / NCTC 13146 / CH001A) protein is Bifunctional protein GlmU.